The chain runs to 320 residues: Cytochrome f (320 aa).

Positions 1–35 (MENRNTFSWVKEQMTRSISVSIMIYVITQTSISNA) are cleaved as a signal peptide. Y36, C56, C59, and H60 together coordinate heme. The helical transmembrane segment at 286 to 306 (VQGLLFFFASVILAQVFLVLK) threads the bilayer.

This sequence belongs to the cytochrome f family. In terms of assembly, the 4 large subunits of the cytochrome b6-f complex are cytochrome b6, subunit IV (17 kDa polypeptide, petD), cytochrome f and the Rieske protein, while the 4 small subunits are PetG, PetL, PetM and PetN. The complex functions as a dimer. The cofactor is heme.

The protein resides in the plastid. It is found in the chloroplast thylakoid membrane. In terms of biological role, component of the cytochrome b6-f complex, which mediates electron transfer between photosystem II (PSII) and photosystem I (PSI), cyclic electron flow around PSI, and state transitions. In Agrostis stolonifera (Creeping bentgrass), this protein is Cytochrome f.